The primary structure comprises 353 residues: tRNA N6-adenosine threonylcarbamoyltransferase (353 aa).

Fe cation is bound by residues His-115 and His-119. Residues 138 to 142 (LVSGG), Asp-171, Gly-184, and Asn-276 each bind substrate. Asp-304 is a Fe cation binding site.

Belongs to the KAE1 / TsaD family. Fe(2+) is required as a cofactor.

It localises to the cytoplasm. It catalyses the reaction L-threonylcarbamoyladenylate + adenosine(37) in tRNA = N(6)-L-threonylcarbamoyladenosine(37) in tRNA + AMP + H(+). Required for the formation of a threonylcarbamoyl group on adenosine at position 37 (t(6)A37) in tRNAs that read codons beginning with adenine. Is involved in the transfer of the threonylcarbamoyl moiety of threonylcarbamoyl-AMP (TC-AMP) to the N6 group of A37, together with TsaE and TsaB. TsaD likely plays a direct catalytic role in this reaction. This Xanthomonas euvesicatoria pv. vesicatoria (strain 85-10) (Xanthomonas campestris pv. vesicatoria) protein is tRNA N6-adenosine threonylcarbamoyltransferase.